Reading from the N-terminus, the 297-residue chain is Glycerol-3-phosphate dehydrogenase [NAD(P)+] (297 aa).

Residues Trp-11, Arg-33, and Lys-79 each coordinate NADPH. Sn-glycerol 3-phosphate contacts are provided by Lys-79, Gly-107, and Ser-109. Ala-111 contributes to the NADPH binding site. 5 residues coordinate sn-glycerol 3-phosphate: Lys-161, Asp-214, Ser-224, Arg-225, and Asn-226. Lys-161 functions as the Proton acceptor in the catalytic mechanism. Arg-225 provides a ligand contact to NADPH. Residues Val-249 and Glu-251 each contribute to the NADPH site.

This sequence belongs to the NAD-dependent glycerol-3-phosphate dehydrogenase family.

Its subcellular location is the cytoplasm. The enzyme catalyses sn-glycerol 3-phosphate + NAD(+) = dihydroxyacetone phosphate + NADH + H(+). The catalysed reaction is sn-glycerol 3-phosphate + NADP(+) = dihydroxyacetone phosphate + NADPH + H(+). It participates in membrane lipid metabolism; glycerophospholipid metabolism. Catalyzes the reduction of the glycolytic intermediate dihydroxyacetone phosphate (DHAP) to sn-glycerol 3-phosphate (G3P), the key precursor for phospholipid synthesis. The chain is Glycerol-3-phosphate dehydrogenase [NAD(P)+] from Campylobacter jejuni subsp. jejuni serotype O:23/36 (strain 81-176).